A 273-amino-acid chain; its full sequence is Undecaprenyl-diphosphatase (273 aa).

7 helical membrane-spanning segments follow: residues 48–68, 89–109, 116–136, 152–172, 193–213, 222–242, and 252–272; these read AANT…VVVF, LTLL…VLFE, LFST…MIVA, ITYK…WPGF, ADFT…LSLL, ADIP…LLAI, and IRLV…YFLY.

This sequence belongs to the UppP family.

The protein resides in the cell membrane. It catalyses the reaction di-trans,octa-cis-undecaprenyl diphosphate + H2O = di-trans,octa-cis-undecaprenyl phosphate + phosphate + H(+). In terms of biological role, catalyzes the dephosphorylation of undecaprenyl diphosphate (UPP). Confers resistance to bacitracin. This is Undecaprenyl-diphosphatase from Geobacillus thermodenitrificans (strain NG80-2).